The primary structure comprises 376 residues: Cyclin-D3-1 (376 aa).

The tract at residues 298 to 376 (KRKSHDSSSS…HLPWAIVATP (79 aa)) is disordered. A compositionally biased stretch (low complexity) spans 321–349 (NSDESSNDSWSASSCNPPTSSSSPQQQPP). Residues 354 to 363 (RGAEENEKKK) are compositionally biased toward basic and acidic residues.

This sequence belongs to the cyclin family. Cyclin D subfamily. Interacts with the C-terminal domain of CDKA-1. Interacts with KRP1/ICK1. Interacts with KRP6. Post-translationally, phosphorylated. Highly expressed in roots and at lower levels in leaves and flowers. Expressed in vegetative shoot meristem and inflorescence.

Its function is as follows. Involved in the control of the cell cycle at the G1/S (start) transition. Activates the G1/S phase transition in response to cytokinin hormone signal, but declines in response to sucrose starvation leading to G1 arrest. Involved in the induction of mitotic cell division. Plays an important role in the switch from cell proliferation to the final stages of differentiation during plant development. May not be involved in the activation of cell cycle in the root apical meristem (RAM) in the early phase of seed germination. Promotes divisions in the guard cells (GCs) after the guard mother cells (GMC) symmetric division. The polypeptide is Cyclin-D3-1 (CYCD3-1) (Arabidopsis thaliana (Mouse-ear cress)).